Consider the following 1488-residue polypeptide: Chromosome partition protein MukB (1488 aa).

Position 34 to 41 (34 to 41 (GGNGAGKS)) interacts with ATP. 3 coiled-coil regions span residues 326–418 (LEAD…QYNQ), 444–472 (LDTFQAKEQEATEKLLSLEQKMSVAQTAH), and 509–602 (RHLA…QRAP). A flexible hinge region spans residues 666–783 (PGGAEDQRLN…SLPIFGRAAR (118 aa)). Coiled coils occupy residues 835-923 (EAEI…AKLE), 977-1116 (EMLS…AKAG), and 1209-1265 (VEAI…LQSV). Positions 1049–1074 (ADSGAEERARQRRDELHAQLSNNRSR) are disordered. Positions 1051 to 1065 (SGAEERARQRRDELH) are enriched in basic and acidic residues.

It belongs to the SMC family. MukB subfamily. As to quaternary structure, homodimerization via its hinge domain. Binds to DNA via its C-terminal region. Interacts, and probably forms a ternary complex, with MukE and MukF via its C-terminal region. The complex formation is stimulated by calcium or magnesium. Interacts with tubulin-related protein FtsZ.

Its subcellular location is the cytoplasm. It is found in the nucleoid. Its function is as follows. Plays a central role in chromosome condensation, segregation and cell cycle progression. Functions as a homodimer, which is essential for chromosome partition. Involved in negative DNA supercoiling in vivo, and by this means organize and compact chromosomes. May achieve or facilitate chromosome segregation by condensation DNA from both sides of a centrally located replisome during cell division. This is Chromosome partition protein MukB from Salmonella arizonae (strain ATCC BAA-731 / CDC346-86 / RSK2980).